We begin with the raw amino-acid sequence, 4835 residues long: Midasin (4835 aa).

AAA-ATPase protomer regions lie at residues 12–161 (EVLR…PLVL), 324–689 (RSLD…HRFR), 797–1049 (MTTI…AEII), 1096–1375 (KFQD…DYIT), 1489–1738 (APTT…FGYR), and 1821–2110 (ALEA…SIDI). Residues 31-38 (GPSASGRT), 356-363 (GPTGIGKT), 814-821 (GTTSSGKT), 1127-1134 (GVSGAGKT), 1513-1520 (GDPGVGKS), and 1839-1846 (GSPESGKS) contribute to the ATP site. The interval 2197–4058 (SVFIASTLNA…DGTGDQNVSK (1862 aa)) is linker. Disordered regions lie at residues 4033 to 4056 (DQKETDNDNQSGLGLGDGTGDQNV) and 4108 to 4523 (IEEE…LLNP). 5 stretches are compositionally biased toward acidic residues: residues 4109-4133 (EEEDSNGSDEEEVLEKEMGDEQGEA), 4141-4150 (EDDDSAEEYS), 4226-4241 (ADGEDETVNEELEEEQ), 4282-4291 (VDIDDNEASD), and 4315-4330 (NDEEEMQKDTEYDQEN). Over residues 4331 to 4346 (ITDSNPDANEVGTNDQ) the composition is skewed to polar residues. Composition is skewed to basic and acidic residues over residues 4347–4360 (KQTHEDNDQFRQEN), 4394–4415 (EFQRIWKERLNIHDRESEKDEA), and 4429–4438 (VEFDDSKSGR). Polar residues predominate over residues 4468–4477 (HNSSCETSQS). Positions 4478–4488 (SHDRPPAEHLN) are enriched in basic and acidic residues. The region spanning 4629–4818 (QVLLAVDDSS…RHIEDLPETL (190 aa)) is the VWFA domain.

The protein belongs to the midasin family. As to quaternary structure, associates with pre-60S ribosomes in the nucleoplasm.

It is found in the nucleus. The protein resides in the nucleolus. It localises to the nucleoplasm. In terms of biological role, nuclear chaperone required for maturation and nuclear export of pre-60S ribosome subunits. Functions at successive maturation steps to remove ribosomal factors at critical transition points, first driving the exit of early pre-60S particles from the nucleolus and then driving late pre-60S particles from the nucleus. The polypeptide is Midasin (MDN1) (Giardia intestinalis (Giardia lamblia)).